A 265-amino-acid chain; its full sequence is 5'-nucleotidase SurE (265 aa).

The a divalent metal cation site is built by aspartate 8, aspartate 9, serine 39, and asparagine 96.

It belongs to the SurE nucleotidase family. A divalent metal cation is required as a cofactor.

The protein localises to the cytoplasm. The catalysed reaction is a ribonucleoside 5'-phosphate + H2O = a ribonucleoside + phosphate. In terms of biological role, nucleotidase that shows phosphatase activity on nucleoside 5'-monophosphates. The chain is 5'-nucleotidase SurE from Dehalococcoides mccartyi (strain CBDB1).